Reading from the N-terminus, the 97-residue chain is Mitochondrial import inner membrane translocase subunit Tim8 A (97 aa).

Residues 43-66 (CWEKCMDKPGPKLDSRAEACFVNC) carry the Twin CX3C motif motif. 2 disulfide bridges follow: C43–C66 and C47–C62. A phosphoserine mark is found at S57, S87, S94, and S96.

Belongs to the small Tim family. Heterohexamer; composed of 3 copies of TIMM8A and 3 copies of TIMM13, named soluble 70 kDa complex. Associates with the TIM22 complex, whose core is composed of TIMM22.

It localises to the mitochondrion inner membrane. Functionally, mitochondrial intermembrane chaperone that participates in the import and insertion of some multi-pass transmembrane proteins into the mitochondrial inner membrane. Also required for the transfer of beta-barrel precursors from the TOM complex to the sorting and assembly machinery (SAM complex) of the outer membrane. Acts as a chaperone-like protein that protects the hydrophobic precursors from aggregation and guide them through the mitochondrial intermembrane space. The TIMM8-TIMM13 complex mediates the import of proteins such as TIMM23, SLC25A12/ARALAR1 and SLC25A13/ARALAR2, while the predominant TIMM9-TIMM10 70 kDa complex mediates the import of much more proteins. In Bos taurus (Bovine), this protein is Mitochondrial import inner membrane translocase subunit Tim8 A (TIMM8A).